A 384-amino-acid chain; its full sequence is Putative glycosyltransferase EpsF (384 aa).

It belongs to the glycosyltransferase group 1 family. Glycosyltransferase 4 subfamily.

In terms of biological role, may be involved in the production of the exopolysaccharide (EPS) component of the extracellular matrix during biofilm formation. EPS is responsible for the adhesion of chains of cells into bundles. Required for biofilm maintenance. This chain is Putative glycosyltransferase EpsF (epsF), found in Bacillus subtilis (strain 168).